The chain runs to 156 residues: Ribosomal RNA large subunit methyltransferase H (156 aa).

S-adenosyl-L-methionine contacts are provided by residues leucine 73, glycine 104, and 123–128 (IGPLTL).

The protein belongs to the RNA methyltransferase RlmH family. Homodimer.

Its subcellular location is the cytoplasm. It catalyses the reaction pseudouridine(1915) in 23S rRNA + S-adenosyl-L-methionine = N(3)-methylpseudouridine(1915) in 23S rRNA + S-adenosyl-L-homocysteine + H(+). Its function is as follows. Specifically methylates the pseudouridine at position 1915 (m3Psi1915) in 23S rRNA. This chain is Ribosomal RNA large subunit methyltransferase H, found in Xanthomonas euvesicatoria pv. vesicatoria (strain 85-10) (Xanthomonas campestris pv. vesicatoria).